We begin with the raw amino-acid sequence, 228 residues long: 2,3-bisphosphoglycerate-dependent phosphoglycerate mutase (228 aa).

Substrate is bound by residues 8–15, 21–22, arginine 60, 87–90, lysine 98, 114–115, and 183–184; these read RHGLSEWN, TG, ERHY, RR, and GN. Histidine 9 (tele-phosphohistidine intermediate) is an active-site residue. Glutamate 87 (proton donor/acceptor) is an active-site residue.

This sequence belongs to the phosphoglycerate mutase family. BPG-dependent PGAM subfamily.

The enzyme catalyses (2R)-2-phosphoglycerate = (2R)-3-phosphoglycerate. The protein operates within carbohydrate degradation; glycolysis; pyruvate from D-glyceraldehyde 3-phosphate: step 3/5. In terms of biological role, catalyzes the interconversion of 2-phosphoglycerate and 3-phosphoglycerate. The protein is 2,3-bisphosphoglycerate-dependent phosphoglycerate mutase of Enterococcus faecalis (strain ATCC 700802 / V583).